A 731-amino-acid polypeptide reads, in one-letter code: Autophagy-related protein 20 (731 aa).

Over residues 1 to 22 (MSSVLRNQDNPPTISEVSSTTK) the composition is skewed to polar residues. A disordered region spans residues 1–130 (MSSVLRNQDN…NNKSNNVSRV (130 aa)). Residues 31–41 (KQEEKEKEKEI) are compositionally biased toward basic and acidic residues. Residues 69–82 (SFMTANSFNEGPNT) are compositionally biased toward polar residues. Low complexity-rich tracts occupy residues 92–102 (NNNSSSNNNRG) and 113–128 (LLLY…NNVS). The PX domain occupies 164–340 (IQITEAGNSN…KFLDPNANWG (177 aa)). A 1,2-diacyl-sn-glycero-3-phospho-(1D-myo-inositol-3-phosphate) is bound by residues Arg205, Ser207, and Lys231. Residues 253–277 (SVAGSNGNSGGSGGGGASGGAGSGS) form a disordered region. Residues 259 to 277 (GNSGGSGGGGASGGAGSGS) are compositionally biased toward gly residues. Arg306 serves as a coordination point for a 1,2-diacyl-sn-glycero-3-phospho-(1D-myo-inositol-3-phosphate). The segment at 586-626 (NSQVKPKNGKYNLEQQQSSTVSPAPPPGPPPSSSSSSSSSS) is disordered. The span at 608-617 (PAPPPGPPPS) shows a compositional bias: pro residues.

This sequence belongs to the sorting nexin family.

It is found in the endosome membrane. The protein resides in the preautophagosomal structure membrane. Required for cytoplasm to vacuole transport (Cvt), pexophagy and mitophagy. Also involved in endoplasmic reticulum-specific autophagic process and is essential for the survival of cells subjected to severe ER stress. Functions in protein retrieval from the endocytic pathway. This is Autophagy-related protein 20 (ATG20) from Candida albicans (strain SC5314 / ATCC MYA-2876) (Yeast).